The primary structure comprises 341 residues: Beta-hexosaminidase (341 aa).

Substrate is bound by residues Asp61, Arg69, Arg134, and 164–165; that span reads KH. The active-site Proton donor/acceptor is His177. The active-site Nucleophile is Asp249.

Belongs to the glycosyl hydrolase 3 family. NagZ subfamily.

It localises to the cytoplasm. The enzyme catalyses Hydrolysis of terminal non-reducing N-acetyl-D-hexosamine residues in N-acetyl-beta-D-hexosaminides.. Its pathway is cell wall biogenesis; peptidoglycan recycling. Plays a role in peptidoglycan recycling by cleaving the terminal beta-1,4-linked N-acetylglucosamine (GlcNAc) from peptide-linked peptidoglycan fragments, giving rise to free GlcNAc, anhydro-N-acetylmuramic acid and anhydro-N-acetylmuramic acid-linked peptides. This Shewanella frigidimarina (strain NCIMB 400) protein is Beta-hexosaminidase.